The primary structure comprises 399 residues: Nicotinate phosphoribosyltransferase (399 aa).

His217 bears the Phosphohistidine; by autocatalysis mark.

This sequence belongs to the NAPRTase family. Transiently phosphorylated on a His residue during the reaction cycle. Phosphorylation strongly increases the affinity for substrates and increases the rate of nicotinate D-ribonucleotide production. Dephosphorylation regenerates the low-affinity form of the enzyme, leading to product release.

It catalyses the reaction nicotinate + 5-phospho-alpha-D-ribose 1-diphosphate + ATP + H2O = nicotinate beta-D-ribonucleotide + ADP + phosphate + diphosphate. The protein operates within cofactor biosynthesis; NAD(+) biosynthesis; nicotinate D-ribonucleotide from nicotinate: step 1/1. In terms of biological role, catalyzes the synthesis of beta-nicotinate D-ribonucleotide from nicotinate and 5-phospho-D-ribose 1-phosphate at the expense of ATP. In Burkholderia orbicola (strain MC0-3), this protein is Nicotinate phosphoribosyltransferase.